We begin with the raw amino-acid sequence, 332 residues long: MSYEHCISGYTNFNENIHYFYQFAYLFTAICINYRILYVIWVSQRHFYRNQSFYNLYSVDCFTSVLAMSNELIFTRSFLYFPQLCVSFSEIVKNSPVFMRIYYCLLSYLIAIKPVIHIFIAVNRMSCVMFPVTYSQNWSQKLRIMLIVIFLAPFLVIWNVLISDNFIGYVNGGFGISYTRRVTWASLSLMQFTLIILTVLITMVTTTVTFYKMTTMKKRIKASERALCIAAALISVGFLLEAITQSFFAFFKEAPWLLDVMNYLRFATMDILFVGSPLVLLLVSDQFRGHVLGSRIGRTQRVSSINNTHSHIHHNTHHTMTRYSYFLWNVNK.

7 consecutive transmembrane segments (helical) span residues 23 to 43 (FAYL…IWVS), 72 to 92 (LIFT…SEIV), 101 to 121 (IYYC…IFIA), 144 to 164 (IMLI…LISD), 184 to 204 (WASL…ITMV), 231 to 251 (AALI…FAFF), and 263 to 283 (YLRF…LLLV).

The protein belongs to the nematode receptor-like protein srg family.

It is found in the membrane. The chain is Serpentine receptor class gamma-3 (srg-3) from Caenorhabditis elegans.